Consider the following 185-residue polypeptide: NOP protein chaperone 1 (185 aa).

Phosphoserine occurs at positions 34, 66, and 177. The disordered stretch occupies residues 121-185; that stretch reads SRSDSKEEDS…DSPASKKKKQ (65 aa).

Interacts with NOP58, RUVBL1 and RUVBL2; the interactions are direct and NOPCHAP1 bridges the association of NOP58 with RUVBL1:RUVBL2 even in absence of snoRNAs. The interactions with RUVBL1 and RUVBL2 are disrupted upon ATP binding.

The protein resides in the nucleus. Client-loading PAQosome/R2TP complex cofactor that selects NOP58 to promote box C/D small nucleolar ribonucleoprotein (snoRNP) assembly. Acts as a bridge between NOP58 and the R2TP complex via RUVBL1:RUVBL2. This is NOP protein chaperone 1 from Mus musculus (Mouse).